We begin with the raw amino-acid sequence, 450 residues long: Ribosomal protein uS12 methylthiotransferase RimO (450 aa).

Residues 7 to 123 (QKVSMVSLGC…IAEILAEKSG (117 aa)) form the MTTase N-terminal domain. The [4Fe-4S] cluster site is built by C16, C52, C86, C161, C165, and C168. In terms of domain architecture, Radical SAM core spans 147 to 377 (SSPAWFSYLK…MRIQARLSFK (231 aa)). The TRAM domain occupies 380–448 (RELIGTTEQV…DYDLIGEIQE (69 aa)).

Belongs to the methylthiotransferase family. RimO subfamily. Requires [4Fe-4S] cluster as cofactor.

It is found in the cytoplasm. It catalyses the reaction L-aspartate(89)-[ribosomal protein uS12]-hydrogen + (sulfur carrier)-SH + AH2 + 2 S-adenosyl-L-methionine = 3-methylsulfanyl-L-aspartate(89)-[ribosomal protein uS12]-hydrogen + (sulfur carrier)-H + 5'-deoxyadenosine + L-methionine + A + S-adenosyl-L-homocysteine + 2 H(+). Its function is as follows. Catalyzes the methylthiolation of an aspartic acid residue of ribosomal protein uS12. The chain is Ribosomal protein uS12 methylthiotransferase RimO from Pelobacter propionicus (strain DSM 2379 / NBRC 103807 / OttBd1).